A 602-amino-acid chain; its full sequence is T-box transcription factor TBX15 (602 aa).

The segment at alanine 46–arginine 84 is disordered. Residues glutamate 71–arginine 84 are compositionally biased toward polar residues. A DNA-binding region (T-box) is located at residues leucine 122–aspartate 304. Threonine 330 bears the Phosphothreonine mark. Disordered regions lie at residues glutamine 338–serine 369 and glutamine 425–isoleucine 447. Low complexity predominate over residues glycine 346 to serine 369. Residues glutamine 425–leucine 446 show a composition bias toward polar residues.

As to quaternary structure, can form a heterodimer with TBX18.

The protein localises to the nucleus. Its function is as follows. Probable transcriptional regulator involved in the development of the skeleton of the limb, vertebral column and head. Acts by controlling the number of mesenchymal precursor cells and chondrocytes. In Homo sapiens (Human), this protein is T-box transcription factor TBX15 (TBX15).